A 902-amino-acid chain; its full sequence is Methionine--tRNA ligase, cytoplasmic (902 aa).

The GST C-terminal domain maps to 74–212 (GWEQDDLTNQ…QKQPQPQPPP (139 aa)). Residues 275–285 (PYVNNVPHLGN) carry the 'HIGH' region motif. Residues 595-599 (KFSKS) carry the 'KMSKS' region motif. K598 contacts ATP. At S827 the chain carries Phosphoserine. Position 837 is a phosphothreonine (T837). A WHEP-TRS domain is found at 843–899 (HIQTLTDEVTKQGNVVRELKAQKADKNQVAAEVAKLLDLKKQLALAEGKPIETPKGK).

This sequence belongs to the class-I aminoacyl-tRNA synthetase family. Monomer. Part of a multisubunit complex that groups tRNA ligases for Arg (RARS1), Asp (DARS1), Gln (QARS1), Ile (IARS1), Leu (LARS1), Lys (KARS1), Met (MARS1) the bifunctional ligase for Glu and Pro (EPRS1) and the auxiliary subunits AIMP1/p43, AIMP2/p38 and EEF1E1/p18. Forms a linear complex that contains MARS1, EEF1E1, EPRS1 and AIMP2 that is at the core of the multisubunit complex.

It localises to the cytoplasm. The protein resides in the cytosol. It is found in the nucleus. Its subcellular location is the nucleolus. The catalysed reaction is tRNA(Met) + L-methionine + ATP = L-methionyl-tRNA(Met) + AMP + diphosphate. In terms of biological role, catalyzes the specific attachment of an amino acid to its cognate tRNA in a 2 step reaction: the amino acid (AA) is first activated by ATP to form AA-AMP and then transferred to the acceptor end of the tRNA. Plays a role in the synthesis of ribosomal RNA in the nucleolus. This is Methionine--tRNA ligase, cytoplasmic (Mars1) from Mus musculus (Mouse).